The chain runs to 946 residues: Serine/arginine repetitive matrix protein 1 (946 aa).

Met-1 carries the post-translational modification N-acetylmethionine. A necessary for DNA and RNA-binding region spans residues 1–151 (MDAGFFRGTS…ASLKKQDEDK (151 aa)). The tract at residues 1–156 (MDAGFFRGTS…QDEDKDKRDK (156 aa)) is necessary for mRNA 3'-end cleavage and cytoplasmic accumulation. Arg-7 is subject to Citrulline. Residues 27–126 (QLKFAECLEK…AGIPSAFLEL (100 aa)) form the PWI domain. A Glycyl lysine isopeptide (Lys-Gly) (interchain with G-Cter in SUMO2) cross-link involves residue Lys-127. Lys-140 carries the post-translational modification N6-acetyllysine. Residues 142–170 (ASLKKQDEDKDKRDKEEKESSREKRERSR) are compositionally biased toward basic and acidic residues. The tract at residues 142 to 946 (ASLKKQDEDK…MRKAQVSPQS (805 aa)) is disordered. Residues 171–207 (SPRRRKSRSPSPRRRSSPVRRERKRSHSRSPRHRTKS) are compositionally biased toward basic residues. A compositionally biased stretch (basic and acidic residues) spans 214–234 (PEKKEKSPELPEPSVRMKDSS). Residues Ser-220 and Ser-227 each carry the phosphoserine modification. Residue Lys-231 forms a Glycyl lysine isopeptide (Lys-Gly) (interchain with G-Cter in SUMO1); alternate linkage. A Glycyl lysine isopeptide (Lys-Gly) (interchain with G-Cter in SUMO2); alternate cross-link involves residue Lys-231. A phosphoserine mark is found at Ser-234 and Ser-240. Thr-241 carries the phosphothreonine modification. Over residues 246 to 273 (KAPKPEPVPEPKEPSPEKNSKKEKEKTR) the composition is skewed to basic and acidic residues. Lys-249 participates in a covalent cross-link: Glycyl lysine isopeptide (Lys-Gly) (interchain with G-Cter in SUMO2). A Phosphoserine modification is found at Ser-260. Composition is skewed to basic residues over residues 274–327 (PRSR…RTPP) and 334–349 (PRHR…RRRS). The necessary for speckles and matrix localization stretch occupies residues 298–707 (RRHRSRSRSY…NKRHSPSPRP (410 aa)). Residues 350–366 (SASLSGSSSSSSSSRSR) are compositionally biased toward low complexity. Phosphoserine occurs at positions 387, 389, 391, and 400. Thr-404 carries the post-translational modification Phosphothreonine. At Ser-412 the chain carries Phosphoserine. Residue Thr-414 is modified to Phosphothreonine. 4 positions are modified to phosphoserine: Ser-418, Ser-427, Ser-429, and Ser-434. Over residues 426–436 (VSVSPGRTSGK) the composition is skewed to polar residues. Lys-445 participates in a covalent cross-link: Glycyl lysine isopeptide (Lys-Gly) (interchain with G-Cter in SUMO2). Ser-448 and Ser-450 each carry phosphoserine. Lys-457 participates in a covalent cross-link: Glycyl lysine isopeptide (Lys-Gly) (interchain with G-Cter in SUMO2). Ser-461 and Ser-463 each carry phosphoserine. Lys-470 participates in a covalent cross-link: Glycyl lysine isopeptide (Lys-Gly) (interchain with G-Cter in SUMO2). A Phosphoserine modification is found at Ser-476. A compositionally biased stretch (low complexity) spans 476–499 (SVQQRRQYRRQNQQSSSDSGSSST). Basic and acidic residues predominate over residues 501-516 (EDERPKRSHVKNGEVG). Ser-522, Ser-524, Ser-526, Ser-528, Ser-530, Ser-561, Ser-563, Ser-572, and Ser-574 each carry phosphoserine. Over residues 555–572 (SSRRRRSPSPPPARRRRS) the composition is skewed to basic residues. The span at 574-585 (SPAPPPPPPPPP) shows a compositional bias: pro residues. Residues 586–611 (PRRRRSPTPPPRRRTPSPPPRRRSPS) show a composition bias toward basic residues. Thr-593 and Thr-600 each carry phosphothreonine. Ser-602 carries the phosphoserine modification. Low complexity predominate over residues 612-624 (PRRYSPPIQRRYS). A Phosphotyrosine modification is found at Tyr-615. 3 positions are modified to phosphoserine: Ser-616, Ser-624, and Ser-626. A Phosphothreonine modification is found at Thr-633. Phosphoserine is present on residues Ser-635, Ser-645, Ser-647, Ser-655, and Ser-657. Residues 640 to 655 (PKRRASPSPPPKRRVS) are compositionally biased toward basic residues. Residues 668–682 (TKRRSPSLSSKHRKG) show a composition bias toward basic residues. The span at 704-718 (SPRPRAPQTSSPPPV) shows a compositional bias: pro residues. A phosphoserine mark is found at Ser-713, Ser-714, Ser-723, Ser-725, Ser-731, and Ser-733. The segment covering 724 to 736 (ASPQGRQSPSPST) has biased composition (polar residues). Thr-736 carries the post-translational modification Phosphothreonine. Phosphoserine occurs at positions 779, 781, 789, 793, 795, 797, 810, 814, 816, and 818. Residues 779–800 (SPSPQSVRRVSSSRSVSGSPEP) are compositionally biased toward low complexity. Thr-819 is modified (phosphothreonine). Phosphoserine is present on residues Ser-822 and Ser-832. Residues 833-842 (PTPSLSPARN) are compositionally biased toward polar residues. Phosphothreonine is present on Thr-834. Phosphoserine occurs at positions 836, 838, and 843. The span at 850–875 (KKKKKKKDKKHKKDKKHKKHKKHKKE) shows a compositional bias: basic residues. Residues 878–907 (VTIATPATAAPAAVSAATTTSAQEEPAAAP) are compositionally biased toward low complexity. Thr-913 carries the phosphothreonine modification. Position 915 is a phosphoserine (Ser-915). Residues 924-934 (DLERHLREKAL) show a composition bias toward basic and acidic residues. Ser-943 carries the phosphoserine modification.

It belongs to the splicing factor SR family. In terms of assembly, identified in the spliceosome C complex. Found in a pre-mRNA splicing complex with SFRS4, SFRS5, SNRP70, SNRPA1, SRRM1 and SRRM2. Component of the minor spliceosome, which splices U12-type introns. Found in a pre-mRNA exonic splicing enhancer (ESE) complex with SNRP70, SNRPA1, SRRM1 and TRA2B/SFRS10. Found in a mRNA splicing-dependent exon junction complex (EJC) with DEK, PRPF8, NCBP1, RBM8A, RNPS1, SRRM1 and ALYREF/THOC4. Interacts with DDX39B, CPSF1, RBM8A, RNPS1, and ALYREF/THOC4. Seems to be a compound of RNA export complexes that are released from speckles in a ATP-dependent manner. Citrullinated by PADI4. In terms of processing, phosphorylated on multiple serine and threonine residues by DYRK3 during the G2-to-M transition, after the nuclear-envelope breakdown. Phosphorylation by DYRK3 promotes disassembly of nuclear speckles.

The protein resides in the nucleus matrix. It localises to the nucleus speckle. Its function is as follows. Part of pre- and post-splicing multiprotein mRNP complexes. As a component of the minor spliceosome, involved in the splicing of U12-type introns in pre-mRNAs. Involved in numerous pre-mRNA processing events. Promotes constitutive and exonic splicing enhancer (ESE)-dependent splicing activation by bridging together sequence-specific (SR family proteins, SFRS4, SFRS5 and TRA2B/SFRS10) and basal snRNP (SNRP70 and SNRPA1) factors of the spliceosome. Stimulates mRNA 3'-end cleavage independently of the formation of an exon junction complex. Binds both pre-mRNA and spliced mRNA 20-25 nt upstream of exon-exon junctions. Binds RNA and DNA with low sequence specificity and has similar preference for either double- or single-stranded nucleic acid substrates. The chain is Serine/arginine repetitive matrix protein 1 (Srrm1) from Mus musculus (Mouse).